A 124-amino-acid chain; its full sequence is Fluoride-specific ion channel FluC (124 aa).

4 helical membrane passes run Met1–Val21, Thr36–Val56, Thr70–Ile90, and Leu100–Ile120. Residues Gly74 and Thr77 each coordinate Na(+).

Belongs to the fluoride channel Fluc/FEX (TC 1.A.43) family.

The protein resides in the cell inner membrane. It catalyses the reaction fluoride(in) = fluoride(out). Na(+) is not transported, but it plays an essential structural role and its presence is essential for fluoride channel function. Its function is as follows. Fluoride-specific ion channel. Important for reducing fluoride concentration in the cell, thus reducing its toxicity. The polypeptide is Fluoride-specific ion channel FluC (Methylobacterium sp. (strain 4-46)).